Reading from the N-terminus, the 404-residue chain is Cysteine desulfurase IscS (404 aa).

Residues 75–76 (AT), Asn-155, Gln-183, and 203–205 (SAH) each bind pyridoxal 5'-phosphate. An N6-(pyridoxal phosphate)lysine modification is found at Lys-206. Thr-243 lines the pyridoxal 5'-phosphate pocket. The active-site Cysteine persulfide intermediate is the Cys-328. Cys-328 is a [2Fe-2S] cluster binding site.

Belongs to the class-V pyridoxal-phosphate-dependent aminotransferase family. NifS/IscS subfamily. In terms of assembly, homodimer. Forms a heterotetramer with IscU, interacts with other sulfur acceptors. Pyridoxal 5'-phosphate serves as cofactor.

It localises to the cytoplasm. It catalyses the reaction (sulfur carrier)-H + L-cysteine = (sulfur carrier)-SH + L-alanine. It functions in the pathway cofactor biosynthesis; iron-sulfur cluster biosynthesis. Master enzyme that delivers sulfur to a number of partners involved in Fe-S cluster assembly, tRNA modification or cofactor biosynthesis. Catalyzes the removal of elemental sulfur atoms from cysteine to produce alanine. Functions as a sulfur delivery protein for Fe-S cluster synthesis onto IscU, an Fe-S scaffold assembly protein, as well as other S acceptor proteins. The chain is Cysteine desulfurase IscS from Neisseria gonorrhoeae (strain ATCC 700825 / FA 1090).